Here is a 475-residue protein sequence, read N- to C-terminus: Aspartyl/glutamyl-tRNA(Asn/Gln) amidotransferase subunit B (475 aa).

This sequence belongs to the GatB/GatE family. GatB subfamily. In terms of assembly, heterotrimer of A, B and C subunits.

It carries out the reaction L-glutamyl-tRNA(Gln) + L-glutamine + ATP + H2O = L-glutaminyl-tRNA(Gln) + L-glutamate + ADP + phosphate + H(+). The enzyme catalyses L-aspartyl-tRNA(Asn) + L-glutamine + ATP + H2O = L-asparaginyl-tRNA(Asn) + L-glutamate + ADP + phosphate + 2 H(+). In terms of biological role, allows the formation of correctly charged Asn-tRNA(Asn) or Gln-tRNA(Gln) through the transamidation of misacylated Asp-tRNA(Asn) or Glu-tRNA(Gln) in organisms which lack either or both of asparaginyl-tRNA or glutaminyl-tRNA synthetases. The reaction takes place in the presence of glutamine and ATP through an activated phospho-Asp-tRNA(Asn) or phospho-Glu-tRNA(Gln). The protein is Aspartyl/glutamyl-tRNA(Asn/Gln) amidotransferase subunit B of Mycoplasma mobile (strain ATCC 43663 / 163K / NCTC 11711) (Mesomycoplasma mobile).